We begin with the raw amino-acid sequence, 284 residues long: Bifunctional protein FolD (284 aa).

NADP(+) is bound by residues 164 to 166 and serine 189; that span reads GRS.

This sequence belongs to the tetrahydrofolate dehydrogenase/cyclohydrolase family. Homodimer.

The enzyme catalyses (6R)-5,10-methylene-5,6,7,8-tetrahydrofolate + NADP(+) = (6R)-5,10-methenyltetrahydrofolate + NADPH. It catalyses the reaction (6R)-5,10-methenyltetrahydrofolate + H2O = (6R)-10-formyltetrahydrofolate + H(+). Its pathway is one-carbon metabolism; tetrahydrofolate interconversion. Functionally, catalyzes the oxidation of 5,10-methylenetetrahydrofolate to 5,10-methenyltetrahydrofolate and then the hydrolysis of 5,10-methenyltetrahydrofolate to 10-formyltetrahydrofolate. In Listeria monocytogenes serotype 4b (strain F2365), this protein is Bifunctional protein FolD.